The following is a 240-amino-acid chain: MARRPRTIGPSASDPGFSPQHALELVRSAIPPVHPAGRPFVGAGLALALAGRRHRWLRRAGLLAAGACAGFFRHPPRVPPTRPGAIVAPADGEICVIDVATPPAELSMGDVALPRVSIFLSLLDAHVQRAPVSGEVIDVQHRPGRFGSADLAAASTENERTSLRIRTPGGAEVVAVQVAGLLARRIICDAHVGDKLSIGDTYGLIRFGSRLDTYLPAGAQPLVTVGQRAIAGETVLAELP.

Ser-209 functions as the Schiff-base intermediate with substrate; via pyruvic acid in the catalytic mechanism. Pyruvic acid (Ser); by autocatalysis is present on Ser-209.

This sequence belongs to the phosphatidylserine decarboxylase family. PSD-A subfamily. As to quaternary structure, heterodimer of a large membrane-associated beta subunit and a small pyruvoyl-containing alpha subunit. Requires pyruvate as cofactor. Is synthesized initially as an inactive proenzyme. Formation of the active enzyme involves a self-maturation process in which the active site pyruvoyl group is generated from an internal serine residue via an autocatalytic post-translational modification. Two non-identical subunits are generated from the proenzyme in this reaction, and the pyruvate is formed at the N-terminus of the alpha chain, which is derived from the carboxyl end of the proenzyme. The post-translation cleavage follows an unusual pathway, termed non-hydrolytic serinolysis, in which the side chain hydroxyl group of the serine supplies its oxygen atom to form the C-terminus of the beta chain, while the remainder of the serine residue undergoes an oxidative deamination to produce ammonia and the pyruvoyl prosthetic group on the alpha chain.

Its subcellular location is the cell membrane. The enzyme catalyses a 1,2-diacyl-sn-glycero-3-phospho-L-serine + H(+) = a 1,2-diacyl-sn-glycero-3-phosphoethanolamine + CO2. The protein operates within phospholipid metabolism; phosphatidylethanolamine biosynthesis; phosphatidylethanolamine from CDP-diacylglycerol: step 2/2. In terms of biological role, catalyzes the formation of phosphatidylethanolamine (PtdEtn) from phosphatidylserine (PtdSer). The chain is Phosphatidylserine decarboxylase proenzyme from Mycobacterium avium (strain 104).